We begin with the raw amino-acid sequence, 415 residues long: Multidrug resistance protein MdtA (415 aa).

An N-terminal signal peptide occupies residues 1–21; the sequence is MKGSYKSRWVIVIVVVIAAIA. Polar residues predominate over residues 31 to 46; sequence DSQSAAPGATKQAQQS. Disordered regions lie at residues 31–56 and 392–415; these read DSQS…GMRA and EAQS…GARS. Basic and acidic residues predominate over residues 399–415; that stretch reads PEEKATSREYAKKGARS.

Belongs to the membrane fusion protein (MFP) (TC 8.A.1) family. In terms of assembly, part of a tripartite efflux system composed of MdtA, MdtB and MdtC.

The protein resides in the cell inner membrane. In terms of biological role, the MdtABC tripartite complex confers resistance against novobiocin and deoxycholate. The polypeptide is Multidrug resistance protein MdtA (Escherichia coli O6:K15:H31 (strain 536 / UPEC)).